Consider the following 248-residue polypeptide: ATP synthase subunit a, chloroplastic (248 aa).

5 helical membrane-spanning segments follow: residues A37–A57, V96–F116, I135–H155, L200–L220, and G221–G241.

Belongs to the ATPase A chain family. As to quaternary structure, F-type ATPases have 2 components, CF(1) - the catalytic core - and CF(0) - the membrane proton channel. CF(1) has five subunits: alpha(3), beta(3), gamma(1), delta(1), epsilon(1). CF(0) has four main subunits: a, b, b' and c.

It localises to the plastid. The protein localises to the chloroplast thylakoid membrane. Functionally, key component of the proton channel; it plays a direct role in the translocation of protons across the membrane. This Angiopteris evecta (Mule's foot fern) protein is ATP synthase subunit a, chloroplastic.